A 62-amino-acid polypeptide reads, in one-letter code: Alpha-elapitoxin-Nn2a (62 aa).

The segment at 1–20 (LECHNQQSSQTPTTTDCSGG) is disordered. Intrachain disulfides connect Cys3–Cys24, Cys17–Cys41, Cys43–Cys54, and Cys55–Cys60.

The protein belongs to the three-finger toxin family. Short-chain subfamily. Type I alpha-neurotoxin sub-subfamily. In terms of tissue distribution, expressed by the venom gland.

It localises to the secreted. Functionally, nicotinic acetylcholine receptor antagonist. Binds to muscle nicotinic acetylcholine receptor (nAChR) and inhibits acetylcholine from binding to the receptor, thereby impairing neuromuscular transmission. Produces peripheral paralysis by blocking neuromuscular transmission at the postsynaptic site. Induces concentration-dependent inhibition of indirect twitches and abolishes contractile responses of tissues to exogenous acetylcholine and carbachol, in the chick biventer cervicis nerve-muscle preparation at 100-300 nM (in vitro). Prior incubation of tissues with Indian polyvalent antivenom (1 ml/0.6 mg) prevents the neurotoxic effects at 100 nM (in vitro). Addition of Indian polyvalent antivenom (1 ml/0.6 mg) at the t90 time point does not reverse the neurotoxic effects (in vitro). Displays non-competitive antagonism of concentration-response curves to carbachol, with a pA2 of 8.01 (in vitro). The sequence is that of Alpha-elapitoxin-Nn2a from Naja naja (Indian cobra).